Reading from the N-terminus, the 530-residue chain is T-complex protein 1 subunit zeta-2 (530 aa).

Belongs to the TCP-1 chaperonin family. In terms of assembly, component of the chaperonin-containing T-complex (TRiC), a heterooligomeric complex of about 850 to 900 kDa that forms two stacked rings, 12 to 16 nm in diameter. In terms of tissue distribution, testis-specific.

The protein localises to the cytoplasm. In terms of biological role, component of the chaperonin-containing T-complex (TRiC), a molecular chaperone complex that assists the folding of proteins upon ATP hydrolysis. The protein is T-complex protein 1 subunit zeta-2 (CCT6B) of Homo sapiens (Human).